The chain runs to 893 residues: MSREGYPNFEEVEIPDFQETNNTVPDLDDLELEYDQYKNNENNDTFNDKDLESNSVAKHNAVNSSKGVKGSKIDYFNPSDVSLYDNSVSQFEETTVSLKEYYDHSIRSHLTVKGACSYLKSVFPIINWLPHYNFSWFTADLIAGITIGCVLVPQSMSYAQVATLPAQYGLYSSFIGAYSYSFFATSKDVCIGPVAVMSLQTAKVIADVTAKYPDGDSAITGPVIATTLALLCGIISAAVGFLRLGFLVELISLNAVAGFMTGSAFNILWGQVPALMGYNSLVNTRAATYKVVIETLKHLPDTKLDAVFGLIPLFLLYVWKWWCGTYGPRLNDRYNSKNPRLHKIIKWTYFYAQASRNGIIIIVFTCIGWAITRGKSKSERPISILGSVPSGLKEVGVFHVPPGLMSKLGPNLPASIIVLLLEHIAISKSFGRINDYKVVPDQELIAIGVSNLLGTFFNAYPATGSFSRSALKAKCNVRTPLSGLFSGSCVLLALYCLTGAFFYIPKATLSAVIIHAVSDLLASYQTTWNFWKMNPLDFICFIVTVLITVFASIEDGIYFAMCWSCAMLILKVAFPAGKFLGRVEVAEVTDAYVRPDSDVVSYVSENNNGISTLEDGGEDDKESSTKYVTNSSKKIETNVQTKGFDSPSSSISQPRIKYHTKWIPFDHKYTRELNPDVQILPPPDGVLVYRLSESYTYLNCSRHYNIITEEVKKVTRRGQLIRHRKKSDRPWNDPGPWEAPAFLKNLKFWKKRENDPESMENAPSTSVDVERDDRPLLKILCLDFSQVAQTDATALQSLVDLRKAINQYADRQVEFHFVGIISPWVKRGLISRGFGTLNEEYSDESIVAGHTSYHVARVPQGEENPEKYSVYTASGTNLPFFHIDIPDFAKWDI.

Residues 1 to 25 are disordered; it reads MSREGYPNFEEVEIPDFQETNNTVP. Topologically, residues 1 to 131 are cytoplasmic; sequence MSREGYPNFE…VFPIINWLPH (131 aa). Residues 132–152 traverse the membrane as a helical segment; sequence YNFSWFTADLIAGITIGCVLV. Topologically, residues 153–163 are extracellular; that stretch reads PQSMSYAQVAT. The helical transmembrane segment at 164 to 184 threads the bilayer; that stretch reads LPAQYGLYSSFIGAYSYSFFA. Topologically, residues 185 to 188 are cytoplasmic; the sequence is TSKD. Residues 189 to 209 form a helical membrane-spanning segment; the sequence is VCIGPVAVMSLQTAKVIADVT. The Extracellular segment spans residues 210–221; that stretch reads AKYPDGDSAITG. The chain crosses the membrane as a helical span at residues 222–242; sequence PVIATTLALLCGIISAAVGFL. The Cytoplasmic portion of the chain corresponds to 243–244; that stretch reads RL. The chain crosses the membrane as a helical span at residues 245–265; sequence GFLVELISLNAVAGFMTGSAF. Topologically, residues 266–305 are extracellular; the sequence is NILWGQVPALMGYNSLVNTRAATYKVVIETLKHLPDTKLD. Residues 306–326 form a helical membrane-spanning segment; sequence AVFGLIPLFLLYVWKWWCGTY. Topologically, residues 327–350 are cytoplasmic; the sequence is GPRLNDRYNSKNPRLHKIIKWTYF. Residues 351–371 form a helical membrane-spanning segment; the sequence is YAQASRNGIIIIVFTCIGWAI. Topologically, residues 372–399 are extracellular; sequence TRGKSKSERPISILGSVPSGLKEVGVFH. The helical transmembrane segment at 400 to 420 threads the bilayer; it reads VPPGLMSKLGPNLPASIIVLL. Residues 421-443 are Cytoplasmic-facing; sequence LEHIAISKSFGRINDYKVVPDQE. Residues 444–464 traverse the membrane as a helical segment; it reads LIAIGVSNLLGTFFNAYPATG. At 465 to 483 the chain is on the extracellular side; the sequence is SFSRSALKAKCNVRTPLSG. A helical transmembrane segment spans residues 484–504; it reads LFSGSCVLLALYCLTGAFFYI. The Cytoplasmic portion of the chain corresponds to 505 to 532; it reads PKATLSAVIIHAVSDLLASYQTTWNFWK. The helical transmembrane segment at 533–551 threads the bilayer; the sequence is MNPLDFICFIVTVLITVFA. The Extracellular segment spans residues 552–559; it reads SIEDGIYF. The helical transmembrane segment at 560–580 threads the bilayer; that stretch reads AMCWSCAMLILKVAFPAGKFL. Topologically, residues 581–893 are cytoplasmic; the sequence is GRVEVAEVTD…DIPDFAKWDI (313 aa). The 179-residue stretch at 676–854 folds into the STAS domain; the sequence is DVQILPPPDG…SIVAGHTSYH (179 aa).

It belongs to the SLC26A/SulP transporter (TC 2.A.53) family.

It is found in the membrane. In terms of biological role, high affinity uptake of sulfate into the cell. This chain is Sulfate permease 2 (SUL2), found in Saccharomyces cerevisiae (strain ATCC 204508 / S288c) (Baker's yeast).